A 277-amino-acid chain; its full sequence is Thymidylate synthase (277 aa).

Residues R27 and 132–133 each bind dUMP; that span reads RR. C152 functions as the Nucleophile in the catalytic mechanism. DUMP-binding positions include 179-182, N190, and 220-222; these read RSAD and HVY. Position 182 (D182) interacts with (6R)-5,10-methylene-5,6,7,8-tetrahydrofolate. Position 276 (A276) interacts with (6R)-5,10-methylene-5,6,7,8-tetrahydrofolate.

It belongs to the thymidylate synthase family. Bacterial-type ThyA subfamily. In terms of assembly, homodimer.

Its subcellular location is the cytoplasm. It carries out the reaction dUMP + (6R)-5,10-methylene-5,6,7,8-tetrahydrofolate = 7,8-dihydrofolate + dTMP. Its pathway is pyrimidine metabolism; dTTP biosynthesis. Its function is as follows. Catalyzes the reductive methylation of 2'-deoxyuridine-5'-monophosphate (dUMP) to 2'-deoxythymidine-5'-monophosphate (dTMP) while utilizing 5,10-methylenetetrahydrofolate (mTHF) as the methyl donor and reductant in the reaction, yielding dihydrofolate (DHF) as a by-product. This enzymatic reaction provides an intracellular de novo source of dTMP, an essential precursor for DNA biosynthesis. The protein is Thymidylate synthase of Albidiferax ferrireducens (strain ATCC BAA-621 / DSM 15236 / T118) (Rhodoferax ferrireducens).